The following is a 116-amino-acid chain: Immunoglobulin heavy variable 3-66 (116 aa).

The signal sequence occupies residues 1 to 19 (MEFGLSWVFLVAILKGVQC). The interval 20 to 44 (EVQLVESGGGLIQPGGSLRLSCAAS) is framework-1. Residues 20 to 116 (EVQLVESGGG…EDTAVYYCAR (97 aa)) enclose the Ig-like domain. Cys41 and Cys114 are joined by a disulfide. Residues 45-52 (GFTVSSNY) form a complementarity-determining-1 region. A framework-2 region spans residues 53 to 69 (MSWVRQAPGKGLEWVSV). A complementarity-determining-2 region spans residues 70–76 (IYSCGST). The segment at 77-114 (YYADSVKGRFTISRDNSKNTLYLQMNSLRAEDTAVYYC) is framework-3. Positions 115–116 (AR) are complementarity-determining-3.

Immunoglobulins are composed of two identical heavy chains and two identical light chains; disulfide-linked.

The protein resides in the secreted. It is found in the cell membrane. Its function is as follows. V region of the variable domain of immunoglobulin heavy chains that participates in the antigen recognition. Immunoglobulins, also known as antibodies, are membrane-bound or secreted glycoproteins produced by B lymphocytes. In the recognition phase of humoral immunity, the membrane-bound immunoglobulins serve as receptors which, upon binding of a specific antigen, trigger the clonal expansion and differentiation of B lymphocytes into immunoglobulins-secreting plasma cells. Secreted immunoglobulins mediate the effector phase of humoral immunity, which results in the elimination of bound antigens. The antigen binding site is formed by the variable domain of one heavy chain, together with that of its associated light chain. Thus, each immunoglobulin has two antigen binding sites with remarkable affinity for a particular antigen. The variable domains are assembled by a process called V-(D)-J rearrangement and can then be subjected to somatic hypermutations which, after exposure to antigen and selection, allow affinity maturation for a particular antigen. This Homo sapiens (Human) protein is Immunoglobulin heavy variable 3-66.